The primary structure comprises 712 residues: TIR domain-containing adapter molecule 1 (712 aa).

The interval 1 to 153 (MACTGPSLPS…CGWDIAGDPG (153 aa)) is TRIF-NTD. The TRAF6-binding motif lies at 84–91 (EDPEEPPD). The pLxIS motif motif lies at 207–210 (LEIS). The residue at position 210 (serine 210) is a Phosphoserine; by TBK1. Disordered regions lie at residues 216–316 (PFLS…SLPL) and 336–384 (LSVE…LFPS). Residue lysine 229 forms a Glycyl lysine isopeptide (Lys-Gly) (interchain with G-Cter in ubiquitin) linkage. The TRAF6-binding motif lies at 248–255 (QEPEEMSW). A compositionally biased stretch (pro residues) spans 265 to 275 (PELPSSPPPGL). A TRAF6-binding motif is present at residues 299-309 (NYPVECTEGSA). The segment covering 347 to 369 (KPCPPTPTTPETSPPPPPPPPSS) has biased composition (pro residues). One can recognise a TIR domain in the interval 393–553 (KFYNFVILHA…QDTRALREQS (161 aa)). Residues 512 to 712 (RLDEHSQIFA…APEDKTQEAE (201 aa)) form a sufficient to induce apoptosis region. 2 stretches are compositionally biased toward pro residues: residues 620 to 633 (PFPT…PPPL) and 640 to 649 (TPPPPSPQPA). The segment at 620-677 (PFPTWPGCPQPPPLHAWQAGTPPPPSPQPAAFPQSLPFPQSPAFPTASPAPPQSPGLQ) is disordered. Low complexity predominate over residues 650–666 (AFPQSLPFPQSPAFPTA).

Homodimer. Found in a multi-helicase-TICAM1 complex at least composed of DHX36, DDX1, DDX21 and TICAM1; this complex exists in resting cells with or without poly(I:C) RNA ligand stimulation. Interacts (via TIR domain) with DDX21 (via C-terminus). Interacts (via TIR domain) with DHX36 (via C-terminus). Interacts with AZI2 and IRF7. Interacts with TICAM2 in TLR4 recruitment. Interaction with PIAS4 inhibits the TICAM1-induced NF-kappa-B, IRF and IFNB1 activation. Interacts with IKBKB and IKBKE. Interaction with SARM1 blocks TICAM1-dependent transcription factor activation. Interacts with TRAF3. Interacts (when phosphorylated) with IRF3; following activation and phosphorylation on the pLxIS motif by TBK1, recruits IRF3. Interacts with TBK1, TRAF6 and RIPK1 and these interactions are enhanced in the presence of WDFY1. Interacts with TRAFD1. Interacts with UBQLN1 (via UBA domain). Interacts with TLR4. Interacts with WDFY1 in response to poly(I:C). Interacts (via the TIR domain) with TLR3 in response to poly(I:C) and this interaction is enhanced in the presence of WDFY1. Interacts with TRIM56. Component of a multi-helicase-TICAM1 complex that acts as a cytoplasmic sensor of viral double-stranded RNA (dsRNA) and plays a role in the activation of a cascade of antiviral responses including the induction of pro-inflammatory cytokines. Interacts (via the TIR domain) with TLR5. Interacts with TRIM8. Interacts with TAX1BP1 and TRIM32; these interactions target TICAM1 to TAX1BP1-mediated selective autophagic degradation. Interacts with DDX50. As to quaternary structure, (Microbial infection) Interacts with hepatitis C virus (HCV) NS3/4A protease; this interaction leads to TICAM1 cleavage, thereby disrupting TLR3 signaling and preventing the establishment of an antiviral state. In terms of assembly, (Microbial infection) Interacts with Seneca Valley virus protease 3C; this interaction allows the cleavage of TICAM1/TRIF and subsequent suppression of host innate immunity. (Microbial infection) Interacts (via C-terminus) with coxsackievirus B3 (CVB3) protease 3C. In terms of processing, phosphorylated by TBK1. Following activation, phosphorylated by TBK1 at Ser-210 in the pLxIS motif. The phosphorylated pLxIS motif constitutes an IRF3-binding motif, leading to recruitment of the transcription factor IRF3 to induce type-I interferons and other cytokines. Post-translationally, polyubiquitinated at Lys-229 by TRIM38 with 'Lys-48'-linked chains, leading to proteasomal degradation. Polyubiquitinated with 'Lys-6'- and 'Lys-33'-linked chains in a TRIM8-dependent manner; ubiquitination disrupts the interaction with TBK1 and subsequent interferon production. (Microbial infection) Cleaved and degraded by hepatitis A virus (HAV) protein 3CD allowing the virus to disrupt host TLR3 signaling. In terms of processing, (Microbial infection) Cleaved by CVB3 protease 3C allowing the virus to disrupt host TLR3 signaling. Post-translationally, (Microbial infection) Cleaved by Seneca Valley virus protease 3C allowing the virus to disrupt host TLR3 signaling. (Microbial infection) Cleaved by protease 3C of human enterovirus D68 (EV68) allowing the virus to disrupt host TLR3 signaling. In terms of processing, (Microbial infection) Cleaved by HCV protease NS3/4A, thereby disrupting TLR3 signaling and preventing the establishment of an antiviral state. Ubiquitously expressed but with higher levels in liver.

The protein localises to the cytoplasmic vesicle. It localises to the autophagosome. It is found in the cytoplasm. Its subcellular location is the cytosol. The protein resides in the mitochondrion. Involved in innate immunity against invading pathogens. Adapter used by TLR3, TLR4 (through TICAM2) and TLR5 to mediate NF-kappa-B and interferon-regulatory factor (IRF) activation, and to induce apoptosis. Ligand binding to these receptors results in TRIF recruitment through its TIR domain. Distinct protein-interaction motifs allow recruitment of the effector proteins TBK1, TRAF6 and RIPK1, which in turn, lead to the activation of transcription factors IRF3 and IRF7, NF-kappa-B and FADD respectively. Phosphorylation by TBK1 on the pLxIS motif leads to recruitment and subsequent activation of the transcription factor IRF3 to induce expression of type I interferon and exert a potent immunity against invading pathogens. Component of a multi-helicase-TICAM1 complex that acts as a cytoplasmic sensor of viral double-stranded RNA (dsRNA) and plays a role in the activation of a cascade of antiviral responses including the induction of pro-inflammatory cytokines. The protein is TIR domain-containing adapter molecule 1 (TICAM1) of Homo sapiens (Human).